Reading from the N-terminus, the 323-residue chain is Serine/threonine-protein phosphatase PP1-gamma catalytic subunit (323 aa).

Mn(2+) contacts are provided by Asp64, His66, Asp92, and Asn124. Residue His125 is the Proton donor of the active site. Mn(2+) is bound by residues His173 and His248. The tract at residues 300 to 323 (EKKKPNASRPVTPPRGMITKQAKK) is disordered.

Belongs to the PPP phosphatase family. PP-1 subfamily. In terms of assembly, PP1 comprises a catalytic subunit, ppp1c1, ppp1cb or ppp1cc, which is folded into its native form by inhibitor 2 and glycogen synthetase kinase 3, and then is complexed to one or several targeting or regulatory subunits. It depends on Mn(2+) as a cofactor.

The protein localises to the cytoplasm. The protein resides in the nucleus. Its subcellular location is the cleavage furrow. It is found in the nucleolus. It localises to the nucleoplasm. The protein localises to the chromosome. The protein resides in the centromere. Its subcellular location is the kinetochore. It is found in the nucleus speckle. It localises to the midbody. The protein localises to the mitochondrion. The protein resides in the cytoskeleton. Its subcellular location is the microtubule organizing center. It catalyses the reaction O-phospho-L-seryl-[protein] + H2O = L-seryl-[protein] + phosphate. The catalysed reaction is O-phospho-L-threonyl-[protein] + H2O = L-threonyl-[protein] + phosphate. Functionally, protein phosphatase 1 (PP1) is essential for cell division, and participates in the regulation of glycogen metabolism, muscle contractility and protein synthesis. Promotes nuclear envelope reassembly by targeting nuclear membrane vesicles to chromatin at the end of mitosis. Acts by dephosphorylating membrane proteins such as lamin B receptor (lbr) to regulate the binding of membrane proteins to chromatin. This chain is Serine/threonine-protein phosphatase PP1-gamma catalytic subunit, found in Xenopus tropicalis (Western clawed frog).